A 375-amino-acid polypeptide reads, in one-letter code: MAVLVKWPWLGVAIPCFLISFTGYFAHFFVLTNFLSFKELLWFQVSLSMIWISYWKAIYKNPGRPTKGFRPLRYEWQNYCTKCETYKPERTHHCKRCNQCVLVMDHHCPWTMNCVGYKNFPHFIRFLFWIIATTGILLHYFVKRIKFTWVNRYATANLVSKQELIFLTILTPLDAFILLTISLLFVRCVKNQIVNGRTQIEAWEMDRIENLFYHQRLLPQLLTNLKEIYPGSLEGQEKEVEEFLSSSTCSFDEVINFPYDINPWVNLLNCMGSPLNWLNPFGGPKADGMVFQKNEISDYDEATSIQDKLLALPWPPDDTRHGIAFPSVSHVEKDTQGGEQVVRRRHVPIAVPPRNEWYNDWGESLEHFGVDVEVE.

Topologically, residues 1–9 are cytoplasmic; sequence MAVLVKWPW. Residues 10–30 traverse the membrane as a helical segment; the sequence is LGVAIPCFLISFTGYFAHFFV. The Lumenal segment spans residues 31-33; that stretch reads LTN. Residues 34 to 54 form a helical membrane-spanning segment; that stretch reads FLSFKELLWFQVSLSMIWISY. The Cytoplasmic portion of the chain corresponds to 55–121; the sequence is WKAIYKNPGR…MNCVGYKNFP (67 aa). The 51-residue stretch at 78-128 folds into the DHHC domain; that stretch reads NYCTKCETYKPERTHHCKRCNQCVLVMDHHCPWTMNCVGYKNFPHFIRFLF. Residue cysteine 108 is the S-palmitoyl cysteine intermediate of the active site. Residues 122–142 form a helical membrane-spanning segment; that stretch reads HFIRFLFWIIATTGILLHYFV. Residues 143–164 are Lumenal-facing; sequence KRIKFTWVNRYATANLVSKQEL. Residues 165–185 traverse the membrane as a helical segment; the sequence is IFLTILTPLDAFILLTISLLF. The Cytoplasmic portion of the chain corresponds to 186-375; that stretch reads VRCVKNQIVN…EHFGVDVEVE (190 aa).

Belongs to the DHHC palmitoyltransferase family. PFA4 subfamily.

Its subcellular location is the endoplasmic reticulum membrane. It carries out the reaction L-cysteinyl-[protein] + hexadecanoyl-CoA = S-hexadecanoyl-L-cysteinyl-[protein] + CoA. Mediates the reversible addition of palmitate to target proteins, thereby regulating their membrane association and biological function. This Eremothecium gossypii (strain ATCC 10895 / CBS 109.51 / FGSC 9923 / NRRL Y-1056) (Yeast) protein is Palmitoyltransferase PFA4.